A 269-amino-acid polypeptide reads, in one-letter code: Thiazole synthase (269 aa).

Catalysis depends on lysine 105, which acts as the Schiff-base intermediate with DXP. 1-deoxy-D-xylulose 5-phosphate-binding positions include glycine 166, 192–193 (AG), and 214–215 (NT). The disordered stretch occupies residues 245-269 (AMSAQDAAQPSTPVLGTPFWHHDHG).

Belongs to the ThiG family. In terms of assembly, homotetramer. Forms heterodimers with either ThiH or ThiS.

Its subcellular location is the cytoplasm. The catalysed reaction is [ThiS sulfur-carrier protein]-C-terminal-Gly-aminoethanethioate + 2-iminoacetate + 1-deoxy-D-xylulose 5-phosphate = [ThiS sulfur-carrier protein]-C-terminal Gly-Gly + 2-[(2R,5Z)-2-carboxy-4-methylthiazol-5(2H)-ylidene]ethyl phosphate + 2 H2O + H(+). It functions in the pathway cofactor biosynthesis; thiamine diphosphate biosynthesis. Its function is as follows. Catalyzes the rearrangement of 1-deoxy-D-xylulose 5-phosphate (DXP) to produce the thiazole phosphate moiety of thiamine. Sulfur is provided by the thiocarboxylate moiety of the carrier protein ThiS. In vitro, sulfur can be provided by H(2)S. This Paracidovorax citrulli (strain AAC00-1) (Acidovorax citrulli) protein is Thiazole synthase.